A 367-amino-acid chain; its full sequence is GTP cyclohydrolase FolE2 (367 aa).

Belongs to the GTP cyclohydrolase IV family.

The catalysed reaction is GTP + H2O = 7,8-dihydroneopterin 3'-triphosphate + formate + H(+). It participates in cofactor biosynthesis; 7,8-dihydroneopterin triphosphate biosynthesis; 7,8-dihydroneopterin triphosphate from GTP: step 1/1. Functionally, converts GTP to 7,8-dihydroneopterin triphosphate. The sequence is that of GTP cyclohydrolase FolE2 from Roseobacter denitrificans (strain ATCC 33942 / OCh 114) (Erythrobacter sp. (strain OCh 114)).